The chain runs to 354 residues: Biotin synthase (354 aa).

The region spanning 41–265 (NEVQISRLLS…IMPHSRVRLS (225 aa)) is the Radical SAM core domain. [4Fe-4S] cluster contacts are provided by C56, C60, and C63. Residues C100, C131, C191, and R263 each contribute to the [2Fe-2S] cluster site.

It belongs to the radical SAM superfamily. Biotin synthase family. As to quaternary structure, homodimer. The cofactor is [4Fe-4S] cluster. [2Fe-2S] cluster serves as cofactor.

The enzyme catalyses (4R,5S)-dethiobiotin + (sulfur carrier)-SH + 2 reduced [2Fe-2S]-[ferredoxin] + 2 S-adenosyl-L-methionine = (sulfur carrier)-H + biotin + 2 5'-deoxyadenosine + 2 L-methionine + 2 oxidized [2Fe-2S]-[ferredoxin]. It functions in the pathway cofactor biosynthesis; biotin biosynthesis; biotin from 7,8-diaminononanoate: step 2/2. In terms of biological role, catalyzes the conversion of dethiobiotin (DTB) to biotin by the insertion of a sulfur atom into dethiobiotin via a radical-based mechanism. This chain is Biotin synthase, found in Shewanella sediminis (strain HAW-EB3).